The following is a 312-amino-acid chain: Ribosomal RNA small subunit methyltransferase H (312 aa).

S-adenosyl-L-methionine is bound by residues 33–35, Asp53, Phe80, Asp102, and Gln109; that span reads GGH.

It belongs to the methyltransferase superfamily. RsmH family.

Its subcellular location is the cytoplasm. It carries out the reaction cytidine(1402) in 16S rRNA + S-adenosyl-L-methionine = N(4)-methylcytidine(1402) in 16S rRNA + S-adenosyl-L-homocysteine + H(+). In terms of biological role, specifically methylates the N4 position of cytidine in position 1402 (C1402) of 16S rRNA. This is Ribosomal RNA small subunit methyltransferase H from Heliobacterium mobile (Heliobacillus mobilis).